The sequence spans 125 residues: MARLAGVDLPREKRMEIALTYIYGIGRTRSKEILRATDISFDVRPKDLDDDQLAKLREALENYRLEGDLRREVQADIRRKIEIGCYQGLRHRRHLPVHGQRTKTNARTRKGPKKTVAGKKKAGKK.

Residues 92–125 (RRHLPVHGQRTKTNARTRKGPKKTVAGKKKAGKK) form a disordered region.

The protein belongs to the universal ribosomal protein uS13 family. Part of the 30S ribosomal subunit. Forms a loose heterodimer with protein S19. Forms two bridges to the 50S subunit in the 70S ribosome.

Its function is as follows. Located at the top of the head of the 30S subunit, it contacts several helices of the 16S rRNA. In the 70S ribosome it contacts the 23S rRNA (bridge B1a) and protein L5 of the 50S subunit (bridge B1b), connecting the 2 subunits; these bridges are implicated in subunit movement. Contacts the tRNAs in the A and P-sites. The protein is Small ribosomal subunit protein uS13 of Saccharopolyspora erythraea (strain ATCC 11635 / DSM 40517 / JCM 4748 / NBRC 13426 / NCIMB 8594 / NRRL 2338).